A 336-amino-acid polypeptide reads, in one-letter code: MKKEHVLHCQFSAWYPFFRGVTIKSVILPLPQNVKDYLLDDGTLVVSGRDDPPTHSQPDSDDEAEEIQWSDDENTATLTAPEFPEFATKVQEAINSLGGSVFPKLNWSAPRDAYWIAMNSSLKCKTLSDIFLLFKSSDFITRDFTQPFIHCTDDSPDPCIEYELVLRKWCELIPGAEFRCFVKENKLIGISQRDYTQYYDHISKQKEEIRRCIQDFFKKHIQYKFLDEDFVFDIYRDSRGKVWLIDFNPFGEVTDSLLFTWEELISENNLNGDFSEVDAQEQDSPAFRCTNSEVTVQPSPYLSYRLPKDFVDLSTGEDAHKLIDFLKLKRNQQEDD.

Serine 60 bears the Phosphoserine mark. ATP-binding residues include lysine 104, tryptophan 107, alanine 109, arginine 111, arginine 167, lysine 168, tryptophan 169, cysteine 170, glutamate 177, arginine 179, arginine 193, aspartate 233, aspartate 246, and asparagine 248. Mg(2+) is bound by residues aspartate 246 and asparagine 248.

The protein belongs to the CDC123 family. As to quaternary structure, interacts with the eIF2 complex gamma subunit EIF2S3 (via C-terminus); the interaction is direct. Interacts with the eIF2 complex alpha subunit EIF2S1. Interacts with the eIF2 complex beta subunit EIF2S2. As to expression, widely expressed. Expressed in spleen, thymus, prostate, testis, ovary, small intestine, colon and leukocytes with the highest expression in testis.

Its subcellular location is the cytoplasm. In terms of biological role, ATP-dependent protein-folding chaperone for the eIF2 complex. Binds to the gamma subunit of the eIF2 complex which allows the subunit to assemble with the alpha and beta subunits. This chain is Translation initiation factor eIF2 assembly protein (CDC123), found in Homo sapiens (Human).